We begin with the raw amino-acid sequence, 282 residues long: Aldo-keto reductase BQ2027_MB2996 (282 aa).

Tyr-57 functions as the Proton donor in the catalytic mechanism. 9 residues coordinate NADPH: Leu-197, Val-235, Arg-237, Ser-238, Ala-239, Arg-243, Ser-246, Asn-247, and Arg-273.

It belongs to the aldo/keto reductase family.

The protein is Aldo-keto reductase BQ2027_MB2996 of Mycobacterium bovis (strain ATCC BAA-935 / AF2122/97).